We begin with the raw amino-acid sequence, 193 residues long: Segregation and condensation protein B (193 aa).

It belongs to the ScpB family. In terms of assembly, homodimer. Homodimerization may be required to stabilize the binding of ScpA to the Smc head domains. Component of a cohesin-like complex composed of ScpA, ScpB and the Smc homodimer, in which ScpA and ScpB bind to the head domain of Smc. The presence of the three proteins is required for the association of the complex with DNA.

It is found in the cytoplasm. Functionally, participates in chromosomal partition during cell division. May act via the formation of a condensin-like complex containing Smc and ScpA that pull DNA away from mid-cell into both cell halves. The polypeptide is Segregation and condensation protein B (Clostridium botulinum (strain ATCC 19397 / Type A)).